Here is a 456-residue protein sequence, read N- to C-terminus: Sensitive to high expression protein 9, mitochondrial (456 aa).

Residues 1 to 30 (MLRYYGATRNLPLVFSINKLMLRASSFTRP) constitute a mitochondrion transit peptide. Residues 31–296 (FHYSSYSLQN…WSDKIRRTST (266 aa)) lie on the Mitochondrial matrix side of the membrane. Coiled coils occupy residues 71-128 (QHLK…KDEL) and 178-277 (IQKL…YRAI). A helical transmembrane segment spans residues 297–317 (WGTFILMGMNIFLFIVLQLLL). Residues 318-435 (EPWKRKRLVG…KLDAPLVFDT (118 aa)) lie on the Mitochondrial intermembrane side of the membrane. Residues 436-456 (LEFYLYSISLVSMTILVSGLI) traverse the membrane as a helical segment.

This sequence belongs to the SHE9 family. Homooligomer. Participates in a complex of about 300 kDa.

The protein localises to the mitochondrion inner membrane. In terms of biological role, required for the maintenance of the structure of the mitochondrial inner membrane. Involved in mitochondrial morphology. Causes growth arrest when highly overexpressed. This is Sensitive to high expression protein 9, mitochondrial (SHE9) from Saccharomyces cerevisiae (strain ATCC 204508 / S288c) (Baker's yeast).